Reading from the N-terminus, the 197-residue chain is Holliday junction branch migration complex subunit RuvA (197 aa).

The segment at 1-64 (MIGRISGLLL…EDAHLLFGFA (64 aa)) is domain I. The tract at residues 65-142 (TEGERQAFRQ…DLGVSAIPGA (78 aa)) is domain II. Residues 143–153 (AGARRPSTMGS) form a flexible linker region. The segment at 153 to 197 (SDVLNALLSLGYNDREANWAVSQLSVDLSVSDGIRQALKFLSKEK) is domain III.

The protein belongs to the RuvA family. In terms of assembly, homotetramer. Forms an RuvA(8)-RuvB(12)-Holliday junction (HJ) complex. HJ DNA is sandwiched between 2 RuvA tetramers; dsDNA enters through RuvA and exits via RuvB. An RuvB hexamer assembles on each DNA strand where it exits the tetramer. Each RuvB hexamer is contacted by two RuvA subunits (via domain III) on 2 adjacent RuvB subunits; this complex drives branch migration. In the full resolvosome a probable DNA-RuvA(4)-RuvB(12)-RuvC(2) complex forms which resolves the HJ.

Its subcellular location is the cytoplasm. Functionally, the RuvA-RuvB-RuvC complex processes Holliday junction (HJ) DNA during genetic recombination and DNA repair, while the RuvA-RuvB complex plays an important role in the rescue of blocked DNA replication forks via replication fork reversal (RFR). RuvA specifically binds to HJ cruciform DNA, conferring on it an open structure. The RuvB hexamer acts as an ATP-dependent pump, pulling dsDNA into and through the RuvAB complex. HJ branch migration allows RuvC to scan DNA until it finds its consensus sequence, where it cleaves and resolves the cruciform DNA. The chain is Holliday junction branch migration complex subunit RuvA from Nitrosospira multiformis (strain ATCC 25196 / NCIMB 11849 / C 71).